The sequence spans 63 residues: uncharacterized protein (63 aa).

This is an uncharacterized protein from Thermoproteus tenax (TTV1).